The primary structure comprises 375 residues: Chaperone protein DnaJ (375 aa).

The J domain maps to 4-69 (DLYETLGVQK…QKRAAYDRYG (66 aa)). A CR-type zinc finger spans residues 133-211 (GKTAQIRVPT…CHGQGRVVEE (79 aa)). The Zn(2+) site is built by C146, C149, C163, C166, C185, C188, C199, and C202. CXXCXGXG motif repeat units lie at residues 146 to 153 (CDVCTGTG), 163 to 170 (CGTCQGTG), 185 to 192 (CPTCGGRG), and 199 to 206 (CTKCHGQG).

The protein belongs to the DnaJ family. Homodimer. Zn(2+) is required as a cofactor.

The protein localises to the cytoplasm. Participates actively in the response to hyperosmotic and heat shock by preventing the aggregation of stress-denatured proteins and by disaggregating proteins, also in an autonomous, DnaK-independent fashion. Unfolded proteins bind initially to DnaJ; upon interaction with the DnaJ-bound protein, DnaK hydrolyzes its bound ATP, resulting in the formation of a stable complex. GrpE releases ADP from DnaK; ATP binding to DnaK triggers the release of the substrate protein, thus completing the reaction cycle. Several rounds of ATP-dependent interactions between DnaJ, DnaK and GrpE are required for fully efficient folding. Also involved, together with DnaK and GrpE, in the DNA replication of plasmids through activation of initiation proteins. The chain is Chaperone protein DnaJ from Sinorhizobium medicae (strain WSM419) (Ensifer medicae).